The chain runs to 1097 residues: Leukemia inhibitory factor receptor (1097 aa).

An N-terminal signal peptide occupies residues 1-44 (MMNISLRLRRPPWMVDSNGRRMTSHFQWLLLTFILLYLMNQVTS). Residues 45-833 (EKRGAPRDLK…SMFVVTKENS (789 aa)) lie on the Extracellular side of the membrane. The region spanning 46-131 (KRGAPRDLKC…ISKFTLNEKN (86 aa)) is the Fibronectin type-III 1 domain. Disulfide bonds link Cys55/Cys65 and Cys82/Cys90. Residues Asn85, Asn131, Asn143, Asn191, Asn243, and Asn303 are each glycosylated (N-linked (GlcNAc...) asparagine). The cysteines at positions 213 and 270 are disulfide-linked. Fibronectin type-III domains follow at residues 332–434 (PPDI…VYPR), 435–534 (IPTS…TEAI), 538–629 (GPDT…IPND), 627–719 (PNDD…IGYI), and 724–833 (PIVA…KENS). Cysteines 341 and 351 form a disulfide. N-linked (GlcNAc...) asparagine glycans are attached at residues Asn366, Asn390, Asn407, Asn426, Asn445, Asn471, Asn481, and Asn489. An intrachain disulfide couples Cys466 to Cys511. The WSXWS motif signature appears at 519–523 (WSKWS). 6 N-linked (GlcNAc...) asparagine glycosylation sites follow: Asn572, Asn652, Asn663, Asn680, Asn729, and Asn787. The chain crosses the membrane as a helical span at residues 834–854 (VGLIIAILIPVAVAVIVGVVT). The Cytoplasmic portion of the chain corresponds to 855-1097 (SILCYRKREW…TNFFQNKPND (243 aa)). The Box 1 motif motif lies at 869–877 (FYPDIPNPE). At Ser927 the chain carries Phosphoserine. Disordered regions lie at residues 982 to 1005 (QPQA…KPQM) and 1022 to 1097 (LDKA…KPND). 2 stretches are compositionally biased toward polar residues: residues 1032–1067 (ANVN…NSRQ) and 1086–1097 (SFTNFFQNKPND). At Ser1044 the chain carries Phosphoserine.

It belongs to the type I cytokine receptor family. Type 2 subfamily. Heterodimer composed of LIFR and IL6ST. The heterodimer formed by LIFR and IL6ST interacts with the complex formed by CNTF and CNTFR.

The protein localises to the cell membrane. Functionally, signal-transducing molecule. May have a common pathway with IL6ST. The soluble form inhibits the biological activity of LIF by blocking its binding to receptors on target cells. The chain is Leukemia inhibitory factor receptor (LIFR) from Canis lupus familiaris (Dog).